A 491-amino-acid chain; its full sequence is MILLTLLYLIIFYIIIDFIKKNYKTKNQLPSPLGIALPIIGHLHLLRTDPYKTLAKASKKTEHGILKCWNGEHLMVVVDNPSIIKQMYVNTNNFTDRPQTKVFEIISRNYKNSGFANGEKWKHLRGLYAPSFTKIKSRPHENIILKYVNFEIKSLKNHAITNSIYNPFLIENINSFGTKVITEIIFGREFSENEVYSLIGPMNKLFGILDTPFPSESISFLKPFYRRSYKECDKQCEELFKLVEKVYDDHLLNLDKDNPKDVMDVMIVETDFKEKDHVICICCDLLMGTKDTFNTIVLWFFVLMINYQDVQLKGYQEIIKVLECTGRDHVTIEDIDKLPYIDGIIKEISRIHPAGPLSVPRTAINDIMINGYFIPKGCHVFQNTYGAVYNYMKESDEPCKMKPERWIENEKLRKDGKLDPTNDLALISLPFSSGIRNCPGVGFAEYELFLLFSNIILNFHLSSPNNLKLNESGHFGLTMKPFPFLVDLKLR.

A helical transmembrane segment spans residues 1 to 21 (MILLTLLYLIIFYIIIDFIKK). Residue Cys438 coordinates heme.

Belongs to the cytochrome P450 family. Heme is required as a cofactor.

It is found in the membrane. The catalysed reaction is discoidol + reduced [NADPH--hemoprotein reductase] + O2 = discodiene + acetone + oxidized [NADPH--hemoprotein reductase] + 2 H2O + H(+). The protein operates within sesquiterpene biosynthesis. Functionally, cytochrome P450 monooxygenase; part of the gene cluster that mediates the biosynthesis of the trisnorsesquiterpene discodiene which has a function during later stages of multicellular development, during the transition from fingers to Mexican hats. The terpene synthase tps8 converts its substrate farnesyl diphosphate (FDP) into the bicyclic sesquiterpene alcohol discoidol. The cytochrome P450 monooxygenase cyp521A1 then catalyzes the oxidative degradation of discoidol to form the trisnorsesquiterpene discodiene. This is Cytochrome P450 monooxygenase 521A1 (cyp521A1) from Dictyostelium discoideum (Social amoeba).